The following is a 22-amino-acid chain: Ocellatin-LB1 (22 aa).

Methionine 22 bears the Methionine amide mark.

In terms of tissue distribution, expressed by the skin glands.

It is found in the secreted. In terms of biological role, antibacterial peptide that inhibits Gram-negative bacteria A.actinomycetemcomitans ATCC 29522 (MIC=222.37 uM) and E.coli ATCC 25922 (MIC=114.04 uM). Also has antifungal activity against C.albicans ATCC 18804 (MIC=233.55 uM) and C.lusitaniae ATCC 56936 (MIC=233.55 uM). No activity against the Gram-positive bacterium S.aureus ATCC 25923. Shows virtually no hemolytic activity towards rabbit erythrocytes. The protein is Ocellatin-LB1 of Leptodactylus labyrinthicus (Labyrinth frog).